A 414-amino-acid chain; its full sequence is Putative gustatory receptor 47b (414 aa).

Topologically, residues 1 to 5 are cytoplasmic; it reads MQRDD. Residues 6–26 traverse the membrane as a helical segment; that stretch reads GFVYCYGNLYSLLLYWGLVTI. Residues 27–40 are Extracellular-facing; that stretch reads RVRSPDRGGAFSNR. The helical transmembrane segment at 41–61 threads the bilayer; that stretch reads WTVCYALFTRSFMVICFMATV. The Cytoplasmic segment spans residues 62 to 142; sequence MTKLRDPEMS…QWNYRRARLK (81 aa). A helical transmembrane segment spans residues 143 to 163; it reads YWYGTVIVGFCFFSFSISLIF. Residues 164–182 are Extracellular-facing; that stretch reads DTTRCTCGIPSTLLMAFTY. The helical transmembrane segment at 183–203 threads the bilayer; it reads TLLTSSVGLLGFVHIGIMDFI. Topologically, residues 204–249 are cytoplasmic; that stretch reads RVRLRLVQQLLHQLYQADDSSEVHERIAYLFEMSKRCSFLLAELNG. Residues 250–270 form a helical membrane-spanning segment; it reads VFGFAAAAGIFYDFTIMTCFV. The Extracellular segment spans residues 271 to 291; sequence YVICQKLLEREPWDPEYVYML. The chain crosses the membrane as a helical span at residues 292–312; that stretch reads LHVAIHTYKVVITSTYGYLLL. At 313–364 the chain is on the cytoplasmic side; sequence REKRNCMHLLSQYSRYFSGQDVARRKTEDFQHWRMHNRQAAMVGSTTLLSVS. The chain crosses the membrane as a helical span at residues 365–385; that stretch reads TIYLVYNGMANYVIILVQLLF. The Extracellular portion of the chain corresponds to 386–414; the sequence is QQQQIKDHQLTSGKDVDIVGPMGPITHMD.

The protein belongs to the insect chemoreceptor superfamily. Gustatory receptor (GR) family. Gr57a subfamily. Expressed in neurons of the terminal external chemosensory organ of larvae.

The protein localises to the cell membrane. Functionally, probable gustatory receptor which mediates acceptance or avoidance behavior, depending on its substrates. This chain is Putative gustatory receptor 47b (Gr47b), found in Drosophila melanogaster (Fruit fly).